The primary structure comprises 779 residues: Tricorn protease-interacting factor F3 (779 aa).

Substrate-binding positions include Glu-102 and 231–235 (GAMEN). His-266 is a Zn(2+) binding site. The Proton acceptor role is filled by Glu-267. 2 residues coordinate Zn(2+): His-270 and Glu-289.

Belongs to the peptidase M1 family. In terms of assembly, part of the tricorn proteolytic complex. Zn(2+) is required as a cofactor.

It localises to the cytoplasm. Functionally, proteases F1, F2 and F3 degrade oligopeptides produced by Tricorn (themselves probably produced by the proteasome), yielding free amino acids. In Thermoplasma volcanium (strain ATCC 51530 / DSM 4299 / JCM 9571 / NBRC 15438 / GSS1), this protein is Tricorn protease-interacting factor F3 (trf3).